A 522-amino-acid polypeptide reads, in one-letter code: BTB/POZ domain-containing protein 3 (522 aa).

The BTB domain occupies Ala120 to Ala190. Residues Phe235 to Gln300 form the BACK domain.

In terms of tissue distribution, strongly expressed in the primary visual cortex.

The protein resides in the cytoplasm. It is found in the cytosol. The protein localises to the nucleus. Functionally, acts as a key regulator of dendritic field orientation during development of sensory cortex. Also directs dendrites toward active axon terminals when ectopically expressed. The sequence is that of BTB/POZ domain-containing protein 3 (BTBD3) from Callithrix jacchus (White-tufted-ear marmoset).